A 358-amino-acid chain; its full sequence is DNA replication and repair protein RecF (358 aa).

Glycine 30–threonine 37 lines the ATP pocket.

It belongs to the RecF family.

The protein resides in the cytoplasm. Functionally, the RecF protein is involved in DNA metabolism; it is required for DNA replication and normal SOS inducibility. RecF binds preferentially to single-stranded, linear DNA. It also seems to bind ATP. The polypeptide is DNA replication and repair protein RecF (Histophilus somni (strain 129Pt) (Haemophilus somnus)).